A 145-amino-acid chain; its full sequence is Histone H2B.10 (145 aa).

A compositionally biased stretch (basic and acidic residues) spans Met-1 to Glu-15. Positions Met-1 to Lys-53 are disordered. Lys-3 carries the post-translational modification N6-methyllysine. N6-acetyllysine occurs at positions 6 and 11. Lys-12 is subject to N6,N6-dimethyllysine. An N6-acetyllysine mark is found at Lys-16, Lys-28, and Lys-34. A compositionally biased stretch (low complexity) spans Lys-16 to Ala-25. At Lys-35 the chain carries N6-acetyllysine; partial. Residue Lys-141 forms a Glycyl lysine isopeptide (Lys-Gly) (interchain with G-Cter in ubiquitin) linkage.

Belongs to the histone H2B family. In terms of assembly, the nucleosome is a histone octamer containing two molecules each of H2A, H2B, H3 and H4 assembled in one H3-H4 heterotetramer and two H2A-H2B heterodimers. The octamer wraps approximately 147 bp of DNA. Interacts with ORTH2. Post-translationally, can be acetylated to form H2BK5ac, H2BK10ac, H2BK15ac, H2BK27ac, H2BK33ac and H2BK34ac. In terms of processing, dimethylated to form H2BK11me2. Monoubiquitinated by BRE1 to form H2BK143ub1 and deubiquitinated by UBP26. Required for heterochromatic histone H3 di- and trimethylation at H3K4me. May give a specific tag for epigenetic transcriptional activation.

Its subcellular location is the nucleus. The protein resides in the chromosome. Functionally, core component of nucleosome. Nucleosomes wrap and compact DNA into chromatin, limiting DNA accessibility to the cellular machineries which require DNA as a template. Histones thereby play a central role in transcription regulation, DNA repair, DNA replication and chromosomal stability. DNA accessibility is regulated via a complex set of post-translational modifications of histones, also called histone code, and nucleosome remodeling. In Arabidopsis thaliana (Mouse-ear cress), this protein is Histone H2B.10.